Consider the following 205-residue polypeptide: Small ribosomal subunit protein uS4 (205 aa).

An S4 RNA-binding domain is found at 95-163 (RRLDNVVYRL…FKENLESRDP (69 aa)).

The protein belongs to the universal ribosomal protein uS4 family. As to quaternary structure, part of the 30S ribosomal subunit. Contacts protein S5. The interaction surface between S4 and S5 is involved in control of translational fidelity.

In terms of biological role, one of the primary rRNA binding proteins, it binds directly to 16S rRNA where it nucleates assembly of the body of the 30S subunit. Functionally, with S5 and S12 plays an important role in translational accuracy. This Persephonella marina (strain DSM 14350 / EX-H1) protein is Small ribosomal subunit protein uS4.